The chain runs to 388 residues: FMRFamide neuropeptides (388 aa).

The N-terminal stretch at 1 to 21 (MVAPLLVFLFSLQLCHTTSWA) is a signal peptide. Positions 22–172 (YVGGNSLNSN…SNHQVIRDSR (151 aa)) are excised as a propeptide. A disordered region spans residues 40-74 (FPAGTSNEVPEDAANGQDDNDDSQLTEPNDNNAPL). Over residues 64-74 (LTEPNDNNAPL) the composition is skewed to polar residues. Phenylalanine amide is present on residues phenylalanine 179, phenylalanine 196, phenylalanine 208, phenylalanine 219, phenylalanine 230, phenylalanine 241, phenylalanine 253, phenylalanine 265, phenylalanine 277, phenylalanine 289, phenylalanine 301, phenylalanine 313, phenylalanine 325, phenylalanine 337, phenylalanine 346, phenylalanine 359, and phenylalanine 372. The interval 360–388 (GRTPTQSSDFMRFGKSLDKSENKTSDLQK) is disordered. Residues 374-388 (KSLDKSENKTSDLQK) are compositionally biased toward basic and acidic residues. Positions 375–388 (SLDKSENKTSDLQK) are excised as a propeptide.

Belongs to the FARP (FMRFamide related peptide) family. In the brain, expressed in 2 large cells in the lateral neurons in each optic lobe, 2 slightly bigger cells on both sides of the tritocerebrum, around 14 small cells in the dorsal area, around 13 cells in the subesophageal ganglion, and in the central brain.

The protein resides in the secreted. This is FMRFamide neuropeptides from Musca domestica (House fly).